Consider the following 826-residue polypeptide: Dolichyl-diphosphooligosaccharide--protein glycosyltransferase subunit STT3B (826 aa).

The disordered stretch occupies residues 1–60; that stretch reads MAEPSAPESKHKSSLNSSPWSGLMALGNSRHGHHGPGAQCAHKAAGGAAPPKPAPAGLSG. Residue alanine 2 is modified to N-acetylalanine. Topologically, residues 2 to 41 are cytoplasmic; sequence AEPSAPESKHKSSLNSSPWSGLMALGNSRHGHHGPGAQCA. Phosphoserine is present on residues serine 13, serine 18, and serine 29. The segment covering 37-49 has biased composition (low complexity); sequence GAQCAHKAAGGAA. A helical membrane pass occupies residues 42 to 86; that stretch reads HKAAGGAAPPKPAPAGLSGGLSQPAGWQSLLSFTILFLAWLAGFS. The Lumenal portion of the chain corresponds to 87–173; sequence SRLFAVIRFE…VHIRDVCVFL (87 aa). The DXD motif 1 signature appears at 101 to 103; the sequence is EFD. Residue aspartate 103 participates in Mn(2+) binding. A helical membrane pass occupies residues 174–192; it reads APTFSGLTSISTFLLTREL. The Cytoplasmic portion of the chain corresponds to 193–194; it reads WN. The chain crosses the membrane as a helical span at residues 195–212; the sequence is QGAGLLAACFIAIVPGYI. Residues 213-223 are Lumenal-facing; it reads SRSVAGSFDNE. Residues aspartate 221 and glutamate 223 each coordinate Mn(2+). The short motif at 221-223 is the DXD motif 2 element; that stretch reads DNE. The helical transmembrane segment at 224–243 threads the bilayer; the sequence is GIAIFALQFTYYLWVKSVKT. Over 244–245 the chain is Cytoplasmic; sequence GS. The chain crosses the membrane as a helical span at residues 246–260; it reads VFWTMCCCLSYFYMV. Over 261–265 the chain is Lumenal; that stretch reads SAWGG. Residues 266 to 282 form a helical membrane-spanning segment; that stretch reads YVFIINLIPLHVFVLLL. Residues 283-287 are Cytoplasmic-facing; that stretch reads MQRYS. A helical transmembrane segment spans residues 288–313; the sequence is KRVYIAYSTFYIVGLILSMQIPFVGF. At 314-321 the chain is on the lumenal side; that stretch reads QPIRTSEH. The helical transmembrane segment at 322-341 threads the bilayer; that stretch reads MAAAGVFALLQAYAFLQYLR. The Cytoplasmic segment spans residues 342–350; the sequence is DRLTKQEFQ. A helical membrane pass occupies residues 351–371; sequence TLFFLGVSLAAGAVFLSVIYL. Topologically, residues 372–410 are lumenal; sequence TYTGYIAPWSGRFYSLWDTGYAKIHIPIIASVSEHQPTT. The short motif at 402–405 is the SVSE motif element; the sequence is SVSE. The helical transmembrane segment at 411 to 433 threads the bilayer; sequence WVSFFFDLHILVCTFPAGLWFCI. The Cytoplasmic portion of the chain corresponds to 434–439; the sequence is KNINDE. A helical transmembrane segment spans residues 440–456; it reads RVFVALYAISAVYFAGV. Residues 457–460 are Lumenal-facing; that stretch reads MVRL. Residue arginine 459 participates in dolichyl diphosphooligosaccharide binding. Residues 461–482 traverse the membrane as a helical segment; it reads MLTLTPVVCMLSAIAFSNVFEH. Residues 483 to 526 lie on the Cytoplasmic side of the membrane; it reads YLGDDMKRENPPVEDSSDEDDKRNQGNLYDKAGKVRKHATEQEK. Positions 490–509 are disordered; the sequence is RENPPVEDSSDEDDKRNQGN. Residues serine 498 and serine 499 each carry the phosphoserine modification. The chain crosses the membrane as a helical span at residues 527–552; that stretch reads TEEGLGPNIKSIVTMLMLMLLMMFAV. The Lumenal portion of the chain corresponds to 553 to 826; it reads HCTWVTSNAY…KGKKISKKTV (274 aa). The interval 604–606 is interacts with target acceptor peptide in protein substrate; that stretch reads WWD. The short motif at 604-608 is the WWDYG motif element; that stretch reads WWDYG. Tyrosine 609 lines the dolichyl diphosphooligosaccharide pocket. Residues asparagine 616 and asparagine 623 are each glycosylated (N-linked (GlcNAc...) asparagine). Residue asparagine 627 is glycosylated (N-linked (GlcNAc...) (high mannose) asparagine). Residue asparagine 641 is glycosylated (N-linked (GlcNAc...) asparagine). Residues 671-678 carry the DK motif motif; sequence DINKFLWM.

Belongs to the STT3 family. In terms of assembly, component of the oligosaccharyltransferase (OST) complex. There are 2 OST complexes, OST-A and OST-B, which contain STT3A or STT3B as catalytic subunit, respectively. OST-A and OST-B contain common core subunits RPN1, RPN2, OST48, OST4, DAD1 and TMEM258, and OST-B contains either MAGT1 or TUSC3 as specific accessory subunit. Requires Mg(2+) as cofactor. The cofactor is Mn(2+). In terms of tissue distribution, expressed in heart, brain, placenta, lung, liver, muscle, kidney and pancreas. Expressed in skin fibroblasts (at protein level).

The protein localises to the endoplasmic reticulum. It is found in the endoplasmic reticulum membrane. The catalysed reaction is a di-trans,poly-cis-dolichyl diphosphooligosaccharide + L-asparaginyl-[protein] = N(4)-(oligosaccharide-(1-&gt;4)-N-acetyl-beta-D-glucosaminyl-(1-&gt;4)-N-acetyl-beta-D-glucosaminyl)-L-asparaginyl-[protein] + a di-trans,poly-cis-dolichyl diphosphate + H(+). The protein operates within protein modification; protein glycosylation. In terms of biological role, catalytic subunit of the oligosaccharyl transferase (OST) complex that catalyzes the initial transfer of a defined glycan (Glc(3)Man(9)GlcNAc(2) in eukaryotes) from the lipid carrier dolichol-pyrophosphate to an asparagine residue within an Asn-X-Ser/Thr consensus motif in nascent polypeptide chains, the first step in protein N-glycosylation. N-glycosylation occurs cotranslationally and the complex associates with the Sec61 complex at the channel-forming translocon complex that mediates protein translocation across the endoplasmic reticulum (ER). All subunits are required for a maximal enzyme activity. This subunit contains the active site and the acceptor peptide and donor lipid-linked oligosaccharide (LLO) binding pockets. STT3B is present in a small subset of OST complexes (OST-B) and mediates both cotranslational and post-translational N-glycosylation of target proteins: STT3B-containing complexes are required for efficient post-translational glycosylation and while they are less competent than STT3A-containing complexes for cotranslational glycosylation, they have the ability to mediate glycosylation of some nascent sites that are not accessible for STT3A. STT3B-containing complexes also act post-translationally and mediate modification of skipped glycosylation sites in unfolded proteins. Plays a role in ER-associated degradation (ERAD) pathway that mediates ubiquitin-dependent degradation of misfolded endoplasmic reticulum proteins by mediating N-glycosylation of unfolded proteins, which are then recognized by the ERAD pathway and targeted for degradation. Mediates glycosylation of the disease variant AMYL-TTR 'Asp-38' of TTR at 'Asn-118', leading to its degradation. This Homo sapiens (Human) protein is Dolichyl-diphosphooligosaccharide--protein glycosyltransferase subunit STT3B.